A 946-amino-acid chain; its full sequence is Altered inheritance of mitochondria protein 3 (946 aa).

2 disordered regions span residues Met-1 to Asn-333 and Met-351 to Glu-903. The span at Ala-36–Lys-54 shows a compositional bias: basic residues. Ser-57, Ser-58, and Ser-64 each carry phosphoserine. The span at Asp-59–Met-68 shows a compositional bias: acidic residues. Over residues Glu-69–Lys-84 the composition is skewed to basic and acidic residues. Low complexity-rich tracts occupy residues Pro-93–Gln-105 and Gln-130–Tyr-158. Polar residues predominate over residues Gly-166–Gly-244. Low complexity-rich tracts occupy residues Gln-245–Ser-267 and Gln-306–Gln-320. Positions Met-351–Tyr-364 are enriched in polar residues. The segment covering Gly-376 to Pro-392 has biased composition (pro residues). Positions Ile-463–Ala-472 are enriched in polar residues. At Ser-473 the chain carries Phosphoserine. Basic and acidic residues-rich tracts occupy residues Asp-485–Thr-499, His-523–Ser-538, and Glu-608–Val-625. Low complexity-rich tracts occupy residues Pro-627–Gln-642 and Ser-666–Ser-675. A Phosphothreonine modification is found at Thr-728. Over residues Asp-748–Lys-758 the composition is skewed to basic and acidic residues. The span at Pro-762–Thr-773 shows a compositional bias: polar residues. A Phosphothreonine modification is found at Thr-860. The segment covering Pro-861 to Val-878 has biased composition (pro residues). Basic residues predominate over residues Lys-887–Leu-898.

Belongs to the AIM3 family. As to quaternary structure, interacts with RVS167.

The protein localises to the membrane raft. This chain is Altered inheritance of mitochondria protein 3 (AIM3), found in Saccharomyces cerevisiae (strain Lalvin EC1118 / Prise de mousse) (Baker's yeast).